Consider the following 351-residue polypeptide: Replication-associated protein (351 aa).

One can recognise a CRESS-DNA virus Rep endonuclease domain in the interval 8–116; it reads QINAKNYFLT…DGDTWRWGTF (109 aa). The RCR-1 signature appears at 15 to 18; it reads FLTY. A divalent metal cation contacts are provided by Glu-49, His-57, and His-59. Positions 57–59 match the RCR-2 motif; the sequence is HLH. The For DNA cleavage activity role is filled by Tyr-103. The short motif at 103-106 is the RCR-3 element; sequence YIDK. Asp-107 provides a ligand contact to a divalent metal cation. Residues 143-153 form a binding to RBR1 region; that stretch reads KSEALKILREL. An oligomerization region spans residues 156–176; sequence RDYLRDFHHISSNLDRIFTKP. Residue 220 to 227 participates in ATP binding; the sequence is GDSRTGKT.

The protein belongs to the geminiviridae Rep protein family. As to quaternary structure, homooligomer. Interacts with the replication enhancer protein (REn). Interacts with host retinoblastoma-related protein 1 (RBR1), and may thereby induce the transcription of host replicative enzymes even if the cell is not dividing anymore. Interacts with host PCNA. Interacts with host SCE1 protein. The cofactor is Mg(2+). Mn(2+) serves as cofactor.

It localises to the host nucleus. In terms of biological role, essential for the replication of viral ssDNA. The closed circular ssDNA genome is first converted to a superhelical dsDNA. Rep binds a specific region at the genome origin of replication. It introduces an endonucleolytic nick within the conserved sequence 5'-TAATATTAC-3' in the intergenic region of the genome present in all geminiviruses, thereby initiating the rolling circle replication (RCR). Following cleavage, binds covalently to the 5'-phosphate of DNA as a tyrosyl ester. The cleavage gives rise to a free 3'-OH that serves as a primer for the cellular DNA polymerase. The polymerase synthesizes the (+) strand DNA by rolling circle mechanism. After one round of replication, a Rep-catalyzed nucleotidyl transfer reaction releases a circular single-stranded virus genome, thereby terminating the replication. Displays origin-specific DNA cleavage, nucleotidyl transferase, ATPase and helicase activities. The chain is Replication-associated protein from Manihot esculenta (Cassava).